The sequence spans 339 residues: Tryptophan--tRNA ligase (339 aa).

Residues 11–13 (QPT) and 19–20 (GN) each bind ATP. The 'HIGH' region motif lies at 12-20 (PTGAIHIGN). D135 is an L-tryptophan binding site. Residues 147-149 (GED), I191, and 200-204 (KMSKS) each bind ATP. The 'KMSKS' region motif lies at 200–204 (KMSKS).

It belongs to the class-I aminoacyl-tRNA synthetase family. Homodimer.

It localises to the cytoplasm. It carries out the reaction tRNA(Trp) + L-tryptophan + ATP = L-tryptophyl-tRNA(Trp) + AMP + diphosphate + H(+). In terms of biological role, catalyzes the attachment of tryptophan to tRNA(Trp). The protein is Tryptophan--tRNA ligase of Prochlorococcus marinus (strain SARG / CCMP1375 / SS120).